We begin with the raw amino-acid sequence, 349 residues long: Protein-glutamate methylesterase/protein-glutamine glutaminase (349 aa).

In terms of domain architecture, Response regulatory spans arginine 2–leucine 118. Aspartate 52 carries the 4-aspartylphosphate modification. The CheB-type methylesterase domain occupies valine 159–lysine 345. Residues serine 164, histidine 191, and aspartate 287 contribute to the active site.

The protein belongs to the CheB family. Phosphorylated by CheA. Phosphorylation of the N-terminal regulatory domain activates the methylesterase activity.

The protein resides in the cytoplasm. It catalyses the reaction [protein]-L-glutamate 5-O-methyl ester + H2O = L-glutamyl-[protein] + methanol + H(+). The catalysed reaction is L-glutaminyl-[protein] + H2O = L-glutamyl-[protein] + NH4(+). Functionally, involved in chemotaxis. Part of a chemotaxis signal transduction system that modulates chemotaxis in response to various stimuli. Catalyzes the demethylation of specific methylglutamate residues introduced into the chemoreceptors (methyl-accepting chemotaxis proteins or MCP) by CheR. Also mediates the irreversible deamidation of specific glutamine residues to glutamic acid. The polypeptide is Protein-glutamate methylesterase/protein-glutamine glutaminase (Archaeoglobus fulgidus (strain ATCC 49558 / DSM 4304 / JCM 9628 / NBRC 100126 / VC-16)).